A 307-amino-acid polypeptide reads, in one-letter code: MGSTMEPPGGGYLHLGAVTSPVGTARVLQLVFGCTTFSLVAHRGGFSGVQGTFCVAAWGFCFALSVLVVACEFTRLHGCLRLSWGNFTAAFAMLATLLSATAAVIYPLYFTRLECPPEPEGCTARNFRLAASVFAGLLFLAYATEVALTRARPGQVASYMATVSGLLKIVQAFVACIIFGALVHDSRYGRYVATQWCVAVYSLCFLATVVVVILSVLGHTGGLGCPFDRMVVVYTFLAVLLYLSAAVIWPVFCFDPKYGEPGRPPDCPRGSCPWDSQLVVATFTYVNLLLYVADLAYSQRIRFVPTF.

MARVEL domains follow at residues 17–154 (AVTS…ARPG) and 159–303 (YMAT…RIRF). 7 consecutive transmembrane segments (helical) span residues 53-73 (FCVA…ACEF), 90-110 (AFAM…PLYF), 129-149 (LAAS…VALT), 163-183 (VSGL…GALV), 198-218 (VAVY…SVLG), 232-252 (VVYT…WPVF), and 278-298 (LVVA…LAYS).

The protein belongs to the MAL family.

The protein resides in the membrane. The polypeptide is Myeloid-associated differentiation marker-like protein 2 (MYADML2) (Bos taurus (Bovine)).